The following is a 309-amino-acid chain: Cytochrome c1, heme protein, mitochondrial (309 aa).

The transit peptide at 1 to 61 directs the protein to the mitochondrion; that stretch reads MFSNLSKRWA…LYADSLTAEA (61 aa). The Mitochondrial intermembrane segment spans residues 62–262; that stretch reads MTAAEHGLHA…TFLNWCAEPE (201 aa). Residues 88–241 enclose the Cytochrome c domain; sequence ASIRRGYQVY…DMVEYEDGTP (154 aa). Heme c contacts are provided by cysteine 101, cysteine 104, and histidine 105. The span at 131–140 shows a compositional bias: acidic residues; the sequence is EFEYDDEPDE. Residues 131 to 168 form a disordered region; the sequence is EFEYDDEPDEQGNPKKRPGKLSDYIPGPYPNEQAARAA. Position 225 (methionine 225) interacts with heme c. Residues 263 to 296 form a helical membrane-spanning segment; it reads HDERKRLGLKTVIILSSLYLLSIWVKKFKWAGIK. Residues 297-309 lie on the Mitochondrial matrix side of the membrane; it reads TRKFVFNPPKPRK.

This sequence belongs to the cytochrome c family. Component of the ubiquinol-cytochrome c oxidoreductase (cytochrome b-c1 complex, complex III, CIII), a multisubunit enzyme composed of 10 subunits. The complex is composed of 3 respiratory subunits cytochrome b (COB), cytochrome c1 (CYT1) and Rieske protein (RIP1), 2 core protein subunits COR1 and QCR2, and 5 low-molecular weight protein subunits QCR6, QCR7, QCR8, QCR9 and QCR10. The complex exists as an obligatory dimer and forms supercomplexes (SCs) in the inner mitochondrial membrane with a monomer or a dimer of cytochrome c oxidase (complex IV, CIV), resulting in 2 different assemblies (supercomplexes III(2)IV and III(2)IV(2)). CYT1 interacts with COX5A at the CIII-CIV interface. Heme c is required as a cofactor.

It localises to the mitochondrion inner membrane. It carries out the reaction a quinol + 2 Fe(III)-[cytochrome c](out) = a quinone + 2 Fe(II)-[cytochrome c](out) + 2 H(+)(out). Component of the ubiquinol-cytochrome c oxidoreductase, a multisubunit transmembrane complex that is part of the mitochondrial electron transport chain which drives oxidative phosphorylation. The respiratory chain contains 3 multisubunit complexes succinate dehydrogenase (complex II, CII), ubiquinol-cytochrome c oxidoreductase (cytochrome b-c1 complex, complex III, CIII) and cytochrome c oxidase (complex IV, CIV), that cooperate to transfer electrons derived from NADH and succinate to molecular oxygen, creating an electrochemical gradient over the inner membrane that drives transmembrane transport and the ATP synthase. The cytochrome b-c1 complex catalyzes electron transfer from ubiquinol to cytochrome c, linking this redox reaction to translocation of protons across the mitochondrial inner membrane, with protons being carried across the membrane as hydrogens on the quinol. In the process called Q cycle, 2 protons are consumed from the matrix, 4 protons are released into the intermembrane space and 2 electrons are passed to cytochrome c. Cytochrome c1 is a catalytic core subunit containing a c-type heme. It transfers electrons from the [2Fe-2S] iron-sulfur cluster of the Rieske protein to cytochrome c. This chain is Cytochrome c1, heme protein, mitochondrial (CYT1), found in Saccharomyces cerevisiae (strain ATCC 204508 / S288c) (Baker's yeast).